The sequence spans 491 residues: Zinc finger protein 655 (491 aa).

Residues 1 to 52 (MEEIPAQEAAGSPRVQFQSLETQSECLSPEPQFVQDTDMEQGLTGDGETREE) are disordered. Polar residues predominate over residues 15–26 (VQFQSLETQSEC). Position 60 is a phosphoserine (glutamine 60). Residues lysine 77, lysine 190, and lysine 201 each participate in a glycyl lysine isopeptide (Lys-Gly) (interchain with G-Cter in SUMO2) cross-link. C2H2-type zinc fingers lie at residues 212 to 234 (YKCD…QRIH), 240 to 262 (YKCK…KRIH), 303 to 325 (YKCS…QKIH), 330 to 353 (CKCT…RVHH), 380 to 402 (YTCS…QRIH), and 408 to 430 (HECN…HKMH).

It belongs to the krueppel C2H2-type zinc-finger protein family. Interacts with VAV1 and CDK4. Interacts with INTS13; promoting association with the integrator complex.

It localises to the nucleus. In terms of biological role, probable transcription factor. The sequence is that of Zinc finger protein 655 from Homo sapiens (Human).